A 165-amino-acid polypeptide reads, in one-letter code: Large ribosomal subunit protein uL10 (165 aa).

Lysine 37 and lysine 105 each carry N6-acetyllysine.

Belongs to the universal ribosomal protein uL10 family. As to quaternary structure, part of the ribosomal stalk of the 50S ribosomal subunit. The N-terminus interacts with L11 and the large rRNA to form the base of the stalk. The C-terminus forms an elongated spine to which L12 dimers bind in a sequential fashion forming a multimeric L10(L12)X complex.

In terms of biological role, protein L10 is also a translational repressor protein. It controls the translation of the rplJL-rpoBC operon by binding to its mRNA. Forms part of the ribosomal stalk, playing a central role in the interaction of the ribosome with GTP-bound translation factors. The chain is Large ribosomal subunit protein uL10 (rplJ) from Escherichia coli O6:H1 (strain CFT073 / ATCC 700928 / UPEC).